A 311-amino-acid polypeptide reads, in one-letter code: tRNA-cytidine(32) 2-sulfurtransferase (311 aa).

A PP-loop motif motif is present at residues 47–52 (SGGKDS). Residues Cys-122, Cys-125, and Cys-213 each coordinate [4Fe-4S] cluster.

The protein belongs to the TtcA family. As to quaternary structure, homodimer. Mg(2+) serves as cofactor. [4Fe-4S] cluster is required as a cofactor.

The protein localises to the cytoplasm. It catalyses the reaction cytidine(32) in tRNA + S-sulfanyl-L-cysteinyl-[cysteine desulfurase] + AH2 + ATP = 2-thiocytidine(32) in tRNA + L-cysteinyl-[cysteine desulfurase] + A + AMP + diphosphate + H(+). It functions in the pathway tRNA modification. In terms of biological role, catalyzes the ATP-dependent 2-thiolation of cytidine in position 32 of tRNA, to form 2-thiocytidine (s(2)C32). The sulfur atoms are provided by the cysteine/cysteine desulfurase (IscS) system. The chain is tRNA-cytidine(32) 2-sulfurtransferase from Pectobacterium carotovorum subsp. carotovorum (strain PC1).